We begin with the raw amino-acid sequence, 482 residues long: Zinc finger protein 223 (482 aa).

A KRAB domain is found at 8 to 78 (VTFKDVAVVF…DIATQREGNS (71 aa)). 5 C2H2-type zinc fingers span residues 176–198 (HSCD…QRVH), 204–226 (FKCD…QRVH), 232–254 (FKCE…CKLH), 260–282 (YNCE…QRIH), and 288–310 (FKCE…CVVH). The C2H2-type 6; degenerate zinc finger occupies 316–338 (NSTGEYGKGFIRRLDLCKHQTIH). C2H2-type zinc fingers lie at residues 344 to 366 (YNCK…QRVH), 372 to 394 (YKCD…HRAH), and 400 to 422 (YNCD…KRLH). The C2H2-type 10; degenerate zinc finger occupies 428–450 (FKCEDCGKKLVYRSYRKDQQKNH).

It belongs to the krueppel C2H2-type zinc-finger protein family.

It localises to the nucleus. Functionally, may be involved in transcriptional regulation. The protein is Zinc finger protein 223 (ZNF223) of Homo sapiens (Human).